The chain runs to 79 residues: Sulfur carrier protein TusA (79 aa).

Cysteine 17 functions as the Cysteine persulfide intermediate in the catalytic mechanism.

Belongs to the sulfur carrier protein TusA family.

Its subcellular location is the cytoplasm. In terms of biological role, sulfur carrier protein which probably makes part of a sulfur-relay system. This is Sulfur carrier protein TusA from Actinobacillus pleuropneumoniae serotype 7 (strain AP76).